Consider the following 403-residue polypeptide: Probable N-acetyltransferase HLS1 (403 aa).

One can recognise an N-acetyltransferase domain in the interval 2 to 177 (TVVREYDPTR…VNPVYAHRVN (176 aa)).

Belongs to the acetyltransferase family.

Ethylene-responsive N-acetyltransferase required for differential cell elongation in the hypocotyl. Regulates apical hook formation of dark-grown seedlings. May control differential cell growth by regulating auxin activity. May be involved in negative feedback regulation of auxin homeostasis through the control of GH3-like genes. Modulates de novo shoot organogenesis. In Arabidopsis thaliana (Mouse-ear cress), this protein is Probable N-acetyltransferase HLS1 (HLS1).